Consider the following 92-residue polypeptide: Small ribosomal subunit protein uS19 (92 aa).

Belongs to the universal ribosomal protein uS19 family.

Functionally, protein S19 forms a complex with S13 that binds strongly to the 16S ribosomal RNA. In Exiguobacterium sibiricum (strain DSM 17290 / CCUG 55495 / CIP 109462 / JCM 13490 / 255-15), this protein is Small ribosomal subunit protein uS19.